Reading from the N-terminus, the 77-residue chain is DNA-directed RNA polymerase subunit epsilon (77 aa).

This sequence belongs to the RNA polymerase subunit epsilon family. As to quaternary structure, RNAP is composed of a core of 2 alpha, a beta and a beta' subunit. The core is associated with a delta subunit, and at least one of epsilon or omega. When a sigma factor is associated with the core the holoenzyme is formed, which can initiate transcription.

It catalyses the reaction RNA(n) + a ribonucleoside 5'-triphosphate = RNA(n+1) + diphosphate. Functionally, a non-essential component of RNA polymerase (RNAP). This chain is DNA-directed RNA polymerase subunit epsilon, found in Streptococcus pneumoniae serotype 19F (strain G54).